The chain runs to 39 residues: Large ribosomal subunit protein bL36 (39 aa).

This sequence belongs to the bacterial ribosomal protein bL36 family.

This chain is Large ribosomal subunit protein bL36, found in Leuconostoc mesenteroides subsp. mesenteroides (strain ATCC 8293 / DSM 20343 / BCRC 11652 / CCM 1803 / JCM 6124 / NCDO 523 / NBRC 100496 / NCIMB 8023 / NCTC 12954 / NRRL B-1118 / 37Y).